A 75-amino-acid polypeptide reads, in one-letter code: Protein B7 (75 aa).

In Human herpesvirus 6B (strain Z29) (HHV-6 variant B), this protein is Protein B7 (B7).